A 411-amino-acid polypeptide reads, in one-letter code: Arginine deiminase (411 aa).

Catalysis depends on Cys401, which acts as the Amidino-cysteine intermediate.

It belongs to the arginine deiminase family.

It localises to the cytoplasm. It carries out the reaction L-arginine + H2O = L-citrulline + NH4(+). It functions in the pathway amino-acid degradation; L-arginine degradation via ADI pathway; carbamoyl phosphate from L-arginine: step 1/2. The sequence is that of Arginine deiminase from Staphylococcus aureus (strain bovine RF122 / ET3-1).